The sequence spans 418 residues: Light-independent protochlorophyllide reductase subunit N (418 aa).

Residues Cys-17, Cys-42, and Cys-103 each contribute to the [4Fe-4S] cluster site.

It belongs to the BchN/ChlN family. As to quaternary structure, protochlorophyllide reductase is composed of three subunits; ChlL, ChlN and ChlB. Forms a heterotetramer of two ChlB and two ChlN subunits. It depends on [4Fe-4S] cluster as a cofactor.

It carries out the reaction chlorophyllide a + oxidized 2[4Fe-4S]-[ferredoxin] + 2 ADP + 2 phosphate = protochlorophyllide a + reduced 2[4Fe-4S]-[ferredoxin] + 2 ATP + 2 H2O. It participates in porphyrin-containing compound metabolism; chlorophyll biosynthesis (light-independent). Functionally, component of the dark-operative protochlorophyllide reductase (DPOR) that uses Mg-ATP and reduced ferredoxin to reduce ring D of protochlorophyllide (Pchlide) to form chlorophyllide a (Chlide). This reaction is light-independent. The NB-protein (ChlN-ChlB) is the catalytic component of the complex. In Prochlorococcus marinus subsp. pastoris (strain CCMP1986 / NIES-2087 / MED4), this protein is Light-independent protochlorophyllide reductase subunit N.